The chain runs to 340 residues: GTP 3',8-cyclase (340 aa).

One can recognise a Radical SAM core domain in the interval 20 to 246 (RFERQYVYLR…PKALSDGPAK (227 aa)). Arginine 29 serves as a coordination point for GTP. 2 residues coordinate [4Fe-4S] cluster: cysteine 36 and cysteine 40. An S-adenosyl-L-methionine-binding site is contributed by tyrosine 42. [4Fe-4S] cluster is bound at residue cysteine 43. Residue arginine 79 participates in GTP binding. Glycine 83 lines the S-adenosyl-L-methionine pocket. A GTP-binding site is contributed by threonine 110. Serine 134 contributes to the S-adenosyl-L-methionine binding site. Residue lysine 171 coordinates GTP. An S-adenosyl-L-methionine-binding site is contributed by methionine 205. Residues cysteine 268 and cysteine 271 each coordinate [4Fe-4S] cluster. Residue 273–275 (RLR) coordinates GTP. Residue cysteine 285 participates in [4Fe-4S] cluster binding.

Belongs to the radical SAM superfamily. MoaA family. As to quaternary structure, monomer and homodimer. [4Fe-4S] cluster serves as cofactor.

It carries out the reaction GTP + AH2 + S-adenosyl-L-methionine = (8S)-3',8-cyclo-7,8-dihydroguanosine 5'-triphosphate + 5'-deoxyadenosine + L-methionine + A + H(+). It functions in the pathway cofactor biosynthesis; molybdopterin biosynthesis. In terms of biological role, catalyzes the cyclization of GTP to (8S)-3',8-cyclo-7,8-dihydroguanosine 5'-triphosphate. This is GTP 3',8-cyclase from Actinobacillus pleuropneumoniae serotype 7 (strain AP76).